A 315-amino-acid polypeptide reads, in one-letter code: Adenine deaminase (315 aa).

Positions 14, 16, and 194 each coordinate Zn(2+). Glu-197 acts as the Proton donor in catalysis. Residue Asp-275 coordinates Zn(2+). Position 276 (Asp-276) interacts with substrate.

The protein belongs to the metallo-dependent hydrolases superfamily. Adenosine and AMP deaminases family. Adenine deaminase type 2 subfamily. Zn(2+) is required as a cofactor.

It catalyses the reaction adenine + H2O + H(+) = hypoxanthine + NH4(+). Its function is as follows. Catalyzes the hydrolytic deamination of adenine to hypoxanthine. Plays an important role in the purine salvage pathway and in nitrogen catabolism. The chain is Adenine deaminase from Pseudomonas putida (strain GB-1).